The sequence spans 362 residues: 3-dehydroquinate synthase (362 aa).

NAD(+)-binding positions include aspartate 72 to lysine 77, glycine 106 to aspartate 110, threonine 130 to threonine 131, lysine 143, lysine 152, and cysteine 170 to threonine 173. Residues glutamate 185, histidine 248, and histidine 265 each contribute to the Zn(2+) site.

It belongs to the sugar phosphate cyclases superfamily. Dehydroquinate synthase family. Co(2+) is required as a cofactor. Requires Zn(2+) as cofactor. NAD(+) serves as cofactor.

Its subcellular location is the cytoplasm. The catalysed reaction is 7-phospho-2-dehydro-3-deoxy-D-arabino-heptonate = 3-dehydroquinate + phosphate. It functions in the pathway metabolic intermediate biosynthesis; chorismate biosynthesis; chorismate from D-erythrose 4-phosphate and phosphoenolpyruvate: step 2/7. Functionally, catalyzes the conversion of 3-deoxy-D-arabino-heptulosonate 7-phosphate (DAHP) to dehydroquinate (DHQ). The sequence is that of 3-dehydroquinate synthase from Aliivibrio salmonicida (strain LFI1238) (Vibrio salmonicida (strain LFI1238)).